The sequence spans 538 residues: Putative amidase kk1C (538 aa).

The tract at residues 1–32 (MTEPTWKTVASEKQQQRESKIPSEWQIPKSSH) is disordered. Residues K134 and S209 each act as charge relay system in the active site. S233 (acyl-ester intermediate) is an active-site residue.

The protein belongs to the amidase family.

It catalyses the reaction a monocarboxylic acid amide + H2O = a monocarboxylate + NH4(+). Its pathway is secondary metabolite biosynthesis. In terms of biological role, putative amidase; part of the gene cluster that mediates the biosynthesis of KK-1, a novel cyclic depsipeptide with 10 residues which is a promising active compound with high activity against many plant pathogens, especially Botrytis cinerea. The role of kk1C in KK-1 biosynthesis has still to be determined. The nonribosomal peptide synthetase (NRPS) kk1B catalyzes the elongation and cyclization of the decapeptide chain composed of 1 D-lactic acid residue (D-Lac), 1 pipecolic acid residue (Pip), 1 aspartic acid residue (Asp), 1 isoleucine residue (Ile), 1 glycine residue (Gly), 1 tyrosine residue (Tyr) and 4 valine residues (Val). The Asp, Ile and 3 Val residues are N-methylated by the 5 methyltransferase domains from the NRPS (found in modules 3, 5, 6, 7 and 9), whereas the Tyr residue is O-methylated by the cluster encoded O-methyltransferase kk1A. The thioesterase kk1J is likely to be involved in the corrective mechanism of peptide chain synthesis. The D-lactate dehydrogenase kk1H is involved in the synthesis of D-lactic acid from pyruvic acid, which is recognized by the A domain of the first kk1B module. The pyrroline-5-carboxylate reductase kk1I is involved in the synthesis of the L-pipecolic acid residue of KK-1 from delta-1-pyrroline-5-carboxylate (P5C), a metabolic intermediate of lysine. It is still unclear how kk1C and kk1D are involved in the production of KK-1. The sequence is that of Putative amidase kk1C from Curvularia clavata.